A 367-amino-acid polypeptide reads, in one-letter code: Apolipoprotein A-V (367 aa).

Residues 1–20 (MAAVITWALALLSVFATVQA) form the signal peptide. Ser52 carries the post-translational modification Phosphoserine. A coiled-coil region spans residues 231–255 (TRKAKDLHTSIQRNLDQLRDELSTF). Residues 305 to 332 (EEIQHQLAPPPPSHSAFAPELGHSDSNK) form a disordered region.

The protein belongs to the apolipoprotein A1/A4/E family. As to quaternary structure, interacts with GPIHBP1. Interacts with SORL1; this interaction leads to APOA5 internalization and sorting either to lysosomes and degradation, or to the trans-Golgi network. Post-translationally, phosphorylated by FAM20C in the extracellular medium. As to expression, liver.

The protein resides in the secreted. The protein localises to the early endosome. It is found in the late endosome. Its subcellular location is the golgi apparatus. It localises to the trans-Golgi network. Functionally, minor apolipoprotein mainly associated with HDL and to a lesser extent with VLDL. May also be associated with chylomicrons. Important determinant of plasma triglyceride (TG) levels by both being a potent stimulator of apo-CII lipoprotein lipase (LPL) TG hydrolysis and an inhibitor of the hepatic VLDL-TG production rate (without affecting the VLDL-apoB production rate). Activates poorly lecithin:cholesterol acyltransferase (LCAT) and does not enhance efflux of cholesterol from macrophages. Binds heparin. This chain is Apolipoprotein A-V (Apoa5), found in Rattus norvegicus (Rat).